Consider the following 193-residue polypeptide: ATP-dependent Clp protease proteolytic subunit (193 aa).

Ser98 functions as the Nucleophile in the catalytic mechanism. The active site involves His123.

It belongs to the peptidase S14 family. In terms of assembly, fourteen ClpP subunits assemble into 2 heptameric rings which stack back to back to give a disk-like structure with a central cavity, resembling the structure of eukaryotic proteasomes.

It is found in the cytoplasm. It catalyses the reaction Hydrolysis of proteins to small peptides in the presence of ATP and magnesium. alpha-casein is the usual test substrate. In the absence of ATP, only oligopeptides shorter than five residues are hydrolyzed (such as succinyl-Leu-Tyr-|-NHMec, and Leu-Tyr-Leu-|-Tyr-Trp, in which cleavage of the -Tyr-|-Leu- and -Tyr-|-Trp bonds also occurs).. Its function is as follows. Cleaves peptides in various proteins in a process that requires ATP hydrolysis. Has a chymotrypsin-like activity. Plays a major role in the degradation of misfolded proteins. The protein is ATP-dependent Clp protease proteolytic subunit of Haemophilus influenzae (strain 86-028NP).